The chain runs to 383 residues: S-adenosylmethionine synthase (383 aa).

His-15 provides a ligand contact to ATP. Asp-17 is a Mg(2+) binding site. Glu-43 is a K(+) binding site. Residues Glu-56 and Gln-99 each contribute to the L-methionine site. The interval 99–109 is flexible loop; it reads QSPDINQGVDR. ATP is bound by residues 164-166, 230-231, Asp-239, 245-246, Ala-262, and Lys-266; these read DAK, RF, and RK. Asp-239 contacts L-methionine. Residue Lys-270 coordinates L-methionine.

This sequence belongs to the AdoMet synthase family. As to quaternary structure, homotetramer; dimer of dimers. The cofactor is Mg(2+). Requires K(+) as cofactor.

Its subcellular location is the cytoplasm. The catalysed reaction is L-methionine + ATP + H2O = S-adenosyl-L-methionine + phosphate + diphosphate. The protein operates within amino-acid biosynthesis; S-adenosyl-L-methionine biosynthesis; S-adenosyl-L-methionine from L-methionine: step 1/1. Catalyzes the formation of S-adenosylmethionine (AdoMet) from methionine and ATP. The overall synthetic reaction is composed of two sequential steps, AdoMet formation and the subsequent tripolyphosphate hydrolysis which occurs prior to release of AdoMet from the enzyme. The chain is S-adenosylmethionine synthase from Shewanella baltica (strain OS223).